The chain runs to 411 residues: Multidrug resistance protein MdtA (411 aa).

The N-terminal stretch at 1–19 is a signal peptide; it reads MNAKRIRGLLILAAVIAIA. Residues 31–49 are compositionally biased toward polar residues; sequence PAAPGTSEQHAARTSHSEN. Residues 31 to 58 form a disordered region; that stretch reads PAAPGTSEQHAARTSHSENSGSGGGRRA.

The protein belongs to the membrane fusion protein (MFP) (TC 8.A.1) family. As to quaternary structure, part of a tripartite efflux system composed of MdtA, MdtB and MdtC.

The protein resides in the cell inner membrane. This is Multidrug resistance protein MdtA from Pectobacterium atrosepticum (strain SCRI 1043 / ATCC BAA-672) (Erwinia carotovora subsp. atroseptica).